Here is a 101-residue protein sequence, read N- to C-terminus: Small ribosomal subunit protein uS14 (101 aa).

Belongs to the universal ribosomal protein uS14 family. In terms of assembly, part of the 30S ribosomal subunit. Contacts proteins S3 and S10.

Binds 16S rRNA, required for the assembly of 30S particles and may also be responsible for determining the conformation of the 16S rRNA at the A site. This chain is Small ribosomal subunit protein uS14, found in Wigglesworthia glossinidia brevipalpis.